The following is a 32-amino-acid chain: Protamine-2 (32 aa).

The interval 1–32 (PRRRRSSSRPVRRRRARRVSRRRRRRGGRRRR) is disordered.

Testis.

The protein localises to the nucleus. The protein resides in the chromosome. In terms of biological role, protamines substitute for histones in the chromatin of sperm during the haploid phase of spermatogenesis. They compact sperm DNA into a highly condensed, stable and inactive complex. The protein is Protamine-2 of Oncorhynchus mykiss (Rainbow trout).